The sequence spans 576 residues: Aspartate--tRNA ligase (576 aa).

Glutamate 173 is an L-aspartate binding site. Positions glutamine 197–lysine 200 are aspartate. Arginine 219 lines the L-aspartate pocket. Residues arginine 219 to glutamate 221 and glutamine 228 each bind ATP. L-aspartate is bound at residue histidine 438. Glutamate 470 serves as a coordination point for ATP. An L-aspartate-binding site is contributed by arginine 477. Position 522–525 (glycine 522–arginine 525) interacts with ATP.

Belongs to the class-II aminoacyl-tRNA synthetase family. Type 1 subfamily. In terms of assembly, homodimer.

The protein localises to the cytoplasm. It carries out the reaction tRNA(Asp) + L-aspartate + ATP = L-aspartyl-tRNA(Asp) + AMP + diphosphate. Functionally, catalyzes the attachment of L-aspartate to tRNA(Asp) in a two-step reaction: L-aspartate is first activated by ATP to form Asp-AMP and then transferred to the acceptor end of tRNA(Asp). The protein is Aspartate--tRNA ligase of Aster yellows witches'-broom phytoplasma (strain AYWB).